A 94-amino-acid polypeptide reads, in one-letter code: Small ribosomal subunit protein bS6 (94 aa).

This sequence belongs to the bacterial ribosomal protein bS6 family.

Its function is as follows. Binds together with bS18 to 16S ribosomal RNA. This chain is Small ribosomal subunit protein bS6, found in Clostridium botulinum (strain Kyoto / Type A2).